A 348-amino-acid polypeptide reads, in one-letter code: Phospho-2-dehydro-3-deoxyheptonate aldolase, Trp-sensitive (348 aa).

The protein belongs to the class-I DAHP synthase family.

It catalyses the reaction D-erythrose 4-phosphate + phosphoenolpyruvate + H2O = 7-phospho-2-dehydro-3-deoxy-D-arabino-heptonate + phosphate. Its pathway is metabolic intermediate biosynthesis; chorismate biosynthesis; chorismate from D-erythrose 4-phosphate and phosphoenolpyruvate: step 1/7. In terms of biological role, stereospecific condensation of phosphoenolpyruvate (PEP) and D-erythrose-4-phosphate (E4P) giving rise to 3-deoxy-D-arabino-heptulosonate-7-phosphate (DAHP). The chain is Phospho-2-dehydro-3-deoxyheptonate aldolase, Trp-sensitive (aroH) from Enterobacter agglomerans (Erwinia herbicola).